The sequence spans 360 residues: MTQQPLRGVTSLRFNQDQSCFCCAMETGVRIYNVEPLMEKGHLDHEQVGSMGLVEMLHRSNLLALVGGGSSPKFSEISVLIWDDAREGKDSKEKLVLEFTFTKPVLSVRMRHDKIVIVLKNRIYVYSFPDNPRKLFEFDTRDNPKGLCDLCPSLEKQLLVFPGHKCGSLQLVDLASTKPGTSSAPFTINAHQSDIACVSLNQPGTVVASASQKGTLIRLFDTQSKEKLVELRRGTDPATLYCINFSHDSSFLCASSDKGTVHIFALKDTRLNRRSALARVGKVGPMIGQYVDSQWSLASFTVPAESACICAFGRNTSKNVNSVIAICVDGTFHKYVFTPDGNCNREAFDVYLDICDDDDF.

WD repeat units lie at residues 1-34, 40-84, 92-128, 133-174, 183-222, 227-266, and 284-329; these read MTQQ…IYNV, KGHL…IWDD, KEKL…VYSF, RKLF…LVDL, SAPF…LFDT, KLVE…IFAL, and GPMI…ICVD. Positions 231–234 match the L/FRRG motif motif; that stretch reads LRRG.

It belongs to the WD repeat PROPPIN family. In terms of assembly, interacts with WIPI1. Interacts with WIPI2. Interacts with ATG2A and ATG2B. Interacts with ULK1. May interact with the PRKAA1, PRKAA2, PRKAB1 and PRKAG1 subunits of the AMPK kinase. May interact with NUDC. As to expression, ubiquitously expressed, with high expression in skeletal muscle and heart. Weakly expressed in liver and placenta. Expression is down-regulated in pancreatic and in kidney tumors.

It localises to the preautophagosomal structure. The protein localises to the cytoplasm. With respect to regulation, activated upon amino-acid starvation. Component of the autophagy machinery that controls the major intracellular degradation process by which cytoplasmic materials are packaged into autophagosomes and delivered to lysosomes for degradation. Binds phosphatidylinositol 3-phosphate (PtdIns3P). Activated by the STK11/AMPK signaling pathway upon starvation, WDR45 is involved in autophagosome assembly downstream of WIPI2, regulating the size of forming autophagosomes. Together with WIPI1, promotes ATG2 (ATG2A or ATG2B)-mediated lipid transfer by enhancing ATG2-association with phosphatidylinositol 3-monophosphate (PI3P)-containing membranes. Probably recruited to membranes through its PtdIns3P activity. This chain is WD repeat domain phosphoinositide-interacting protein 4 (WDR45), found in Homo sapiens (Human).